The primary structure comprises 198 residues: Autophagy-related protein 16 (198 aa).

Residues 24-177 (ELVQTCSQMA…NKELVDRWMK (154 aa)) adopt a coiled-coil conformation.

Belongs to the ATG16 family. In terms of assembly, homodimer. Part of the ATG5-ATG12/ATG16 complex. Several units of each may be present in this complex. Interacts directly with ATG12.

The protein resides in the preautophagosomal structure membrane. Its function is as follows. Stabilizes the ATG5-ATG12 conjugate. The ATG5-ATG12/ATG16 complex is required for efficient promotion of ATG8-conjugation to phosphatidylethanolamine and ATG8 localization to the pre-autophagosomal structure (PAS). Also recruits ATG3 to the PAS. Involved in endoplasmic reticulum-specific autophagic process and is essential for the survival of cells subjected to severe ER stress. Autophagy is required for proper vegetative growth, asexual/sexual reproduction, and full virulence. Autophagy is particularly involved in the biosynthesis of deoxynivalenol (DON), an important virulence determinant. In Gibberella zeae (strain ATCC MYA-4620 / CBS 123657 / FGSC 9075 / NRRL 31084 / PH-1) (Wheat head blight fungus), this protein is Autophagy-related protein 16.